Consider the following 489-residue polypeptide: Virion host shutoff protein (489 aa).

4 disordered regions span residues 110-135 (EEAS…AFSN), 142-161 (SLAS…PSAA), 285-316 (RSQT…GGTE), and 333-363 (YEDD…ILTP). Positions 124–134 (ITDSRPSSAFS) are enriched in polar residues.

The protein belongs to the herpesviridae VHS protein family. As to quaternary structure, interacts with human EIF4H, EIF4A1 and EIF4A2; interaction with eIF4AI and EIF4A2 presumably allows Vhs protein to associate with the eIF4F cap-binding complex.

Its subcellular location is the virion. Its function is as follows. Minor structural protein that acts as an endoribonuclease during lytic infection. Degrades host mRNAs in the cytoplasm by cutting them at preferred sites, including some in regions of translation initiation. Together with inhibition of host splicing by ICP27, contributes to an overall decrease in host protein synthesis. Also, after the onset of viral transcription, accelerates the turnover of viral mRNA, thereby facilitating the sequential expression of different classes of viral genes. Binds translation initiation factors eIF4H, eIF4AI, and eIF4AII, thereby may interact directly with the translation initiation complex and thus digest specifically mRNAs. Also impedes antigen presentation by major histocompatibility complex class I and class II molecules, inhibits secretion of cytokines that would otherwise recruit lymphocytes and neutrophils cells to the site of infection and blocks the activation of dendritic cells. Impedes the alpha/beta interferon-mediated response to infection by evading the cGAS/ STING-mediated DNA-sensing pathway and degrading CGAS via its RNase activity. In Human herpesvirus 1 (strain KOS) (HHV-1), this protein is Virion host shutoff protein (UL41).